A 45-amino-acid polypeptide reads, in one-letter code: Large ribosomal subunit protein bL34 (45 aa).

Positions 1 to 45 (MTKRTFGGTSRKRKRVSGFRVRMRSHTGRRVIKSRRQKGRERIAV) are disordered. The segment covering 10–39 (SRKRKRVSGFRVRMRSHTGRRVIKSRRQKG) has biased composition (basic residues).

The protein belongs to the bacterial ribosomal protein bL34 family.

This Prochlorococcus marinus (strain MIT 9301) protein is Large ribosomal subunit protein bL34.